Here is a 358-residue protein sequence, read N- to C-terminus: Chorismate synthase (358 aa).

Arg-46 contacts NADP(+). FMN is bound by residues 123–125, 235–236, Gly-275, 290–294, and Arg-316; these read RSS, NA, and KPTPS.

This sequence belongs to the chorismate synthase family. As to quaternary structure, homotetramer. It depends on FMNH2 as a cofactor.

It catalyses the reaction 5-O-(1-carboxyvinyl)-3-phosphoshikimate = chorismate + phosphate. It functions in the pathway metabolic intermediate biosynthesis; chorismate biosynthesis; chorismate from D-erythrose 4-phosphate and phosphoenolpyruvate: step 7/7. Functionally, catalyzes the anti-1,4-elimination of the C-3 phosphate and the C-6 proR hydrogen from 5-enolpyruvylshikimate-3-phosphate (EPSP) to yield chorismate, which is the branch point compound that serves as the starting substrate for the three terminal pathways of aromatic amino acid biosynthesis. This reaction introduces a second double bond into the aromatic ring system. This is Chorismate synthase from Sulfurimonas denitrificans (strain ATCC 33889 / DSM 1251) (Thiomicrospira denitrificans (strain ATCC 33889 / DSM 1251)).